A 581-amino-acid polypeptide reads, in one-letter code: Frizzled-3 (581 aa).

The first 19 residues, 1 to 19 (MYAASILILHLTWAVATIA), serve as a signal peptide directing secretion. Topologically, residues 20 to 237 (ANGAGHNGPV…TSSQKKTSET (218 aa)) are extracellular. The 122-residue stretch at 35–156 (PNGLQCQPIA…PEKHELCMQI (122 aa)) folds into the FZ domain. Disulfide bonds link C40/C101, C48/C94, C85/C123, C112/C153, and C116/C141. N-linked (GlcNAc...) asparagine glycosylation occurs at N54. N206 carries an N-linked (GlcNAc...) asparagine glycan. The helical transmembrane segment at 238–258 (LILGLSAVCFVLTLFALVTFW) threads the bilayer. Residues 259–270 (AEPTRFGYPERP) are Cytoplasmic-facing. Residues 271-291 (VLFLCLCYNLFSVCYLERIVF) traverse the membrane as a helical segment. Topologically, residues 292–321 (HNQARMHDVELQGRLMRPGCLLTPPCLASY) are extracellular. The helical transmembrane segment at 322–342 (ITTSYLSLCAASWWLIFALCF) threads the bilayer. Over 343–359 (YLSSHKKWSSEALEKRS) the chain is Cytoplasmic. The helical transmembrane segment at 360–380 (GLFHVLAWVPPLAPPIAALLL) threads the bilayer. At 381 to 393 (EKVRPSELTGMCY) the chain is on the extracellular side. The helical transmembrane segment at 394 to 414 (APGFVELPALVLLLLGLYFTL) threads the bilayer. At 415–442 (RASRSLLSLQQQLQPTLAHHRFGQIRKR) the chain is on the cytoplasmic side. A helical transmembrane segment spans residues 443–463 (FVLFSLLYFAPTTAGVVAALC). The Extracellular segment spans residues 464–488 (ERYADSVPSCSTPDDCLSPTPLSAW). Residues 489-509 (PALVRIFFQLVGGTLTGLWVW) form a helical membrane-spanning segment. Residues 510-581 (SRKTCESYRN…PVYNPNQSRV (72 aa)) are Cytoplasmic-facing. The PDZ-binding signature appears at 579-581 (SRV).

It belongs to the G-protein coupled receptor Fz/Smo family. As to expression, wing, leg and eye imaginal disks. In embryos, expressed is seen in brain, proventriculus, Malpighian tubules, anal plate and visceral mesoderm of parasegment 8.

It is found in the membrane. Functionally, receptor for Wnt proteins. Most of frizzled receptors are coupled to the beta-catenin canonical signaling pathway, which leads to the activation of disheveled proteins, inhibition of GSK-3 kinase, nuclear accumulation of beta-catenin and activation of Wnt target genes. A second signaling pathway involving PKC and calcium fluxes has been seen for some family members, but it is not yet clear if it represents a distinct pathway or if it can be integrated in the canonical pathway, as PKC seems to be required for Wnt-mediated inactivation of GSK-3 kinase. Both pathways seem to involve interactions with G-proteins. Required to coordinate the cytoskeletons of epidermal cells to produce a parallel array of cuticular hairs and bristles. In Drosophila melanogaster (Fruit fly), this protein is Frizzled-3 (fz3).